Consider the following 347-residue polypeptide: Heat-inducible transcription repressor HrcA (347 aa).

This sequence belongs to the HrcA family.

Functionally, negative regulator of class I heat shock genes (grpE-dnaK-dnaJ and groELS operons). Prevents heat-shock induction of these operons. The protein is Heat-inducible transcription repressor HrcA of Rhodococcus erythropolis (strain PR4 / NBRC 100887).